Here is a 244-residue protein sequence, read N- to C-terminus: 7-cyano-7-deazaguanine synthase (244 aa).

19-29 contacts ATP; that stretch reads FSGGQDSTTCL. 4 residues coordinate Zn(2+): cysteine 207, cysteine 222, cysteine 225, and cysteine 228.

This sequence belongs to the QueC family. It depends on Zn(2+) as a cofactor.

The catalysed reaction is 7-carboxy-7-deazaguanine + NH4(+) + ATP = 7-cyano-7-deazaguanine + ADP + phosphate + H2O + H(+). Its pathway is purine metabolism; 7-cyano-7-deazaguanine biosynthesis. Its function is as follows. Catalyzes the ATP-dependent conversion of 7-carboxy-7-deazaguanine (CDG) to 7-cyano-7-deazaguanine (preQ(0)). The chain is 7-cyano-7-deazaguanine synthase from Bordetella avium (strain 197N).